The sequence spans 374 residues: All-trans-retinol dehydrogenase [NAD(+)] ADH7 (374 aa).

Zn(2+) contacts are provided by Cys-47, His-68, Cys-98, Cys-101, Cys-104, Cys-112, and Cys-174. NAD(+)-binding positions include 199–204 (GLGGVG), Asp-223, Lys-228, 292–294 (VGA), and Arg-369.

This sequence belongs to the zinc-containing alcohol dehydrogenase family. Class-IV subfamily. In terms of assembly, homodimer. Zn(2+) is required as a cofactor. As to expression, high expression in the stomach mucosa. Lower expression in eye, thymus, skin and ovary. Very low expression in small intestine, liver and uterus.

It is found in the cytoplasm. The catalysed reaction is a primary alcohol + NAD(+) = an aldehyde + NADH + H(+). The enzyme catalyses 10-hydroxydecanoate + NAD(+) = 10-oxodecanoate + NADH + H(+). It catalyses the reaction all-trans-retinol + NAD(+) = all-trans-retinal + NADH + H(+). It carries out the reaction 9-cis-retinol + NAD(+) = 9-cis-retinal + NADH + H(+). The catalysed reaction is all-trans-3,4-didehydroretinol + NAD(+) = all-trans-3,4-didehydroretinal + NADH + H(+). The enzyme catalyses all-trans-4-hydroxyretinol + NAD(+) = all-trans-4-hydroxyretinal + NADH + H(+). It catalyses the reaction all-trans-4-oxoretinol + NAD(+) = all-trans-4-oxoretinal + NADH + H(+). It carries out the reaction 12-hydroxydodecanoate + NAD(+) = 12-oxododecanoate + NADH + H(+). The catalysed reaction is 16-hydroxyhexadecanoate + NAD(+) = 16-oxohexadecanoate + NADH + H(+). The enzyme catalyses hexan-1-ol + NAD(+) = hexanal + NADH + H(+). It catalyses the reaction (E)-hex-2-en-1-ol + NAD(+) = (E)-hex-2-enal + NADH + H(+). It carries out the reaction (E)-4-hydroxynon-2-en-1-ol + NAD(+) = (E)-4-hydroxynon-2-enal + NADH + H(+). Its activity is regulated as follows. Retinol oxidation is inhibited by the detergent Tween 80. Ethanol inhibits both all-trans-retinol and 9-cis-retinol oxidation. 13-cis-retinol is an effective competitive inhibitor of the 9-cis-retinol oxidation. All-trans-retinoic acid is a powerful inhibitor of all-trans-retinol oxidation. 13-cis-retinoic acid is a powerful inhibitor of all-trans-retinol oxidation. Cimetidine competitively inhibited ethanol oxidation. Its function is as follows. Catalyzes the NAD-dependent oxidation of all-trans-retinol, alcohol, aldehyde and omega-hydroxy fatty acids and their derivatives. Oxidizes preferentially all trans-retinol, all-trans-4-hydroxyretinol, 9-cis-retinol, 2-hexenol, and long chain omega-hydroxy fatty acids such as juniperic acid. In vitro can also catalyze the NADH-dependent reduction of all-trans-retinal and aldehydes and their derivatives. Reduces preferentially all trans-retinal, all-trans-4-oxoretinal and hexanal. Catalyzes in the oxidative direction with higher efficiency. Therefore may participate in retinoid metabolism, fatty acid omega-oxidation, and elimination of cytotoxic aldehydes produced by lipid peroxidation. This chain is All-trans-retinol dehydrogenase [NAD(+)] ADH7 (Adh7), found in Mus musculus (Mouse).